A 255-amino-acid chain; its full sequence is ATP-dependent L-serine kinase (255 aa).

Residue glutamate 36 is part of the active site. Valine 74 lines the O-phospho-L-serine pocket. Aspartate 75 lines the Mg(2+) pocket. Residues glycine 76, histidine 77, histidine 78, tryptophan 108, lysine 234, threonine 236, and histidine 238 each coordinate O-phospho-L-serine.

The protein belongs to the SerK family. It depends on Mg(2+) as a cofactor.

It catalyses the reaction L-serine + ATP = O-phospho-L-serine + ADP + H(+). Its function is as follows. Free serine kinase that uses ATP to phosphorylate L-serine to yield O-phospho-L-serine and ADP. In Desulfurococcus mucosus (strain ATCC 35584 / DSM 2162 / JCM 9187 / O7/1), this protein is ATP-dependent L-serine kinase.